Reading from the N-terminus, the 1031-residue chain is Beta-galactosidase (1031 aa).

Positions 100 and 198 each coordinate substrate. Aspartate 198 is a Na(+) binding site. Mg(2+) is bound by residues glutamate 412, histidine 414, and glutamate 457. Substrate-binding positions include glutamate 457 and 533-536 (EYAH). Glutamate 457 functions as the Proton donor in the catalytic mechanism. Residue glutamate 533 is the Nucleophile of the active site. Asparagine 593 is a binding site for Mg(2+). The Na(+) site is built by phenylalanine 597 and asparagine 600. The substrate site is built by asparagine 600 and tryptophan 1005.

It belongs to the glycosyl hydrolase 2 family. As to quaternary structure, homotetramer. Mg(2+) serves as cofactor. Na(+) is required as a cofactor.

The catalysed reaction is Hydrolysis of terminal non-reducing beta-D-galactose residues in beta-D-galactosides.. The sequence is that of Beta-galactosidase from Vibrio vulnificus (strain YJ016).